Here is an 84-residue protein sequence, read N- to C-terminus: MAYLKIVLVALMLVLAVSAMRRPDQQDQDISVAKRVACKCDDDGPDVRSATFTGTVDLGSCNSGWEKCASYYTVIADCCRKPRG.

A signal peptide spans 1–19; sequence MAYLKIVLVALMLVLAVSA. A propeptide spanning residues 20–33 is cleaved from the precursor; it reads MRRPDQQDQDISVA. Cystine bridges form between Cys38-Cys78, Cys40-Cys68, and Cys61-Cys79.

It belongs to the sea anemone sodium channel inhibitory toxin family. Type II subfamily.

The protein localises to the secreted. It localises to the nematocyst. Binds specifically to the voltage-gated sodium channel (Nav) and delays its inactivation. This chain is Delta-thalatoxin-Cad1a, found in Cryptodendrum adhaesivum (Adhesive sea anemone).